We begin with the raw amino-acid sequence, 206 residues long: Small ribosomal subunit protein uS4 (206 aa).

In terms of domain architecture, S4 RNA-binding spans Ser-96–Ala-156.

The protein belongs to the universal ribosomal protein uS4 family. In terms of assembly, part of the 30S ribosomal subunit. Contacts protein S5. The interaction surface between S4 and S5 is involved in control of translational fidelity.

Its function is as follows. One of the primary rRNA binding proteins, it binds directly to 16S rRNA where it nucleates assembly of the body of the 30S subunit. In terms of biological role, with S5 and S12 plays an important role in translational accuracy. The sequence is that of Small ribosomal subunit protein uS4 from Laribacter hongkongensis (strain HLHK9).